Reading from the N-terminus, the 1094-residue chain is Probable arabinosyltransferase C (1094 aa).

Transmembrane regions (helical) follow at residues 28 to 50 (IARY…TPLL), 232 to 251 (AAMI…LHIL), 264 to 286 (PARW…WWHF), 341 to 360 (SIWM…WVIS), 373 to 392 (TSRA…WLPL), 431 to 453 (IGAL…LVAI), 466 to 488 (RFGV…IPIF), 530 to 552 (SIAR…AMSL), 565 to 582 (SRRI…MMFT), 586 to 608 (WTHH…AVAV), 620 to 642 (TVFA…GWWY), 657 to 679 (WRWS…AAWF), and 700 to 722 (LAGI…EVVS). Positions 817 to 831 (GSEPGTEGGTTAAPG) are enriched in low complexity. Positions 817 to 836 (GSEPGTEGGTTAAPGINGSR) are disordered.

It belongs to the emb family.

Its subcellular location is the cell membrane. Arabinosyl transferase responsible for the polymerization of arabinose into the arabinan of arabinogalactan. The polypeptide is Probable arabinosyltransferase C (embC) (Mycobacterium tuberculosis (strain CDC 1551 / Oshkosh)).